A 400-amino-acid chain; its full sequence is Bifunctional arginine demethylase and lysyl-hydroxylase psr-1 (400 aa).

The 165-residue stretch at 146-310 (RKTKKLSEDY…LVWPKTVKGR (165 aa)) folds into the JmjC domain. Residue threonine 189 coordinates substrate. Fe cation-binding residues include histidine 192 and aspartate 194. Position 202 (asparagine 202) interacts with 2-oxoglutarate. Lysine 209 serves as a coordination point for substrate. Histidine 278 lines the Fe cation pocket. A 2-oxoglutarate-binding site is contributed by threonine 290. Residues 342–400 (DMNESSSDSSSSSSSSDDSSDESDCDDSGRCGGRKRKNDDRSNECPEKMSTTYFQNSLV) form a disordered region. Residues 346–358 (SSSDSSSSSSSSD) are compositionally biased toward low complexity. The segment covering 378–388 (KNDDRSNECPE) has biased composition (basic and acidic residues). Positions 390-400 (MSTTYFQNSLV) are enriched in polar residues.

The protein belongs to the JMJD6 family. As to quaternary structure, interacts with ced-5 and ced-12. It depends on Fe(2+) as a cofactor.

It is found in the nucleus. In terms of biological role, dioxygenase that can both act as a histone arginine demethylase and a lysyl-hydroxylase. This Caenorhabditis elegans protein is Bifunctional arginine demethylase and lysyl-hydroxylase psr-1 (psr-1).